The chain runs to 671 residues: MAELTALHTLTAQMKREGIRRLLVLSGEEGWCFEHTLKLRDALPGDWLWISPRPDAENHCSPSALQTLLGREFRHAVFDARHGFDAAAFAALSGTLKAGSWLVLLLPVWEEWENQPDADSLRWSDCPDPIATPHFVQHLKRVLTADNEAILWRQNQPFSLAHFTPRTDWYPATGAPQPEQQQLLKQLMTMPPGVAAVTAARGRGKSALAGQLISRIAGRAIVTAPAKASTDVLAQFAGEKFRFIAPDALLASDEQADWLVVDEAAAIPAPLLHQLVSRFPRTLLTTTVQGYEGTGRGFLLKFCARFPHLHRFELQQPIRWAQGCPLEKMVSEALVFDDENFTHTPQGNIVISAFEQTLWQSDPETPLKVYQLLSGAHYRTSPLDLRRMMDAPGQHFLQAAGENEIAGALWLVDEGGLSQQLSQAVWAGFRRPRGNLVAQSLAAHGNNPLAATLRGRRVSRIAVHPARQREGTGRQLIAGALQYTQDLDYLSVSFGYTGELWRFWQRCGFVLVRMGNHREASSGCYTAMALLPMSDAGKQLAEREHYRLRRDAQALAQWNGETLPVDPLNDAVLSDDDWLELAGFAFAHRPLLTSLGCLLRLLQTSELALPALRGRLQKNASDAQLCTTLKLSGRKMLLVRQREEAAQALFALNDVRTERLRDRITQWQLFH.

Residues Gln180, 202–211 (GRGKSALAGQ), and Arg319 contribute to the ATP site. The N-acetyltransferase domain occupies 356-531 (QTLWQSDPET…SGCYTAMALL (176 aa)). Acetyl-CoA-binding positions include 461 to 463 (IAV), 468 to 474 (QREGTGR), Glu499, and Arg506.

This sequence belongs to the RNA cytidine acetyltransferase family. TmcA subfamily.

It is found in the cytoplasm. The enzyme catalyses cytidine(34) in elongator tRNA(Met) + acetyl-CoA + ATP + H2O = N(4)-acetylcytidine(34) in elongator tRNA(Met) + ADP + phosphate + CoA + H(+). It carries out the reaction 2-hydroxyisobutanoyl-CoA + L-lysyl-[protein] = N(6)-(2-hydroxyisobutanoyl)-L-lysyl-[protein] + CoA + H(+). With respect to regulation, ATP/GTP hydrolysis is stimulated by the addition of acetyl-CoA and tRNA(Met). Binding of acetyl-CoA to TmcA activates both ATPase and tRNA-binding activities. ATP promotes the 2-hydroxyisobutyryltransferase activity. Its function is as follows. Catalyzes the formation of N(4)-acetylcytidine (ac(4)C) at the wobble position of tRNA(Met), by using acetyl-CoA as an acetyl donor and ATP (or GTP). It recognizes the wobble base of tRNA(Met), thus distinguishing between tRNA(Met) and the structurally similar tRNA(Ile2). Could use an RNA helicase motor driven by ATP hydrolysis to deliver the wobble base of tRNA(Met) to the acetyltransferase domain of TmcA. In terms of biological role, also functions as a lysine 2-hydroxyisobutyryltransferase to regulate transcription. Can specifically catalyze the 2-hydroxyisobutyrylation (Khib) of the DNA-binding protein H-NS. Hydroxyisobutyrylation of H-NS decreases its DNA-binding activity, promotes the expression of acid-resistance genes and enhances bacterial survival under extreme acid stress. This chain is tRNA(Met) cytidine acetyltransferase TmcA, found in Escherichia coli (strain K12).